The chain runs to 780 residues: ATP-dependent 6-phosphofructokinase, liver type (780 aa).

At A2 the chain carries N-acetylalanine. Residues A2 to H390 are N-terminal catalytic PFK domain 1. Residues G25, R88–C89, and G118–S121 contribute to the ATP site. D119 serves as a coordination point for Mg(2+). Substrate-binding positions include S164–D166, R201, M208–R210, E264, R292, and H298–R301. D166 functions as the Proton acceptor in the catalytic mechanism. The residue at position 377 (S377) is a Phosphoserine. The tract at residues Q391–F400 is interdomain linker. A C-terminal regulatory PFK domain 2 region spans residues S401–F780. Beta-D-fructose 2,6-bisphosphate contacts are provided by residues R470, T527–N531, R565, M572–G574, and E628. O-linked (GlcNAc) serine glycosylation is present at S529. Position 640 is a phosphotyrosine (Y640). Beta-D-fructose 2,6-bisphosphate is bound by residues R654, H660–Q663, and R734. Position 775 is a phosphoserine (S775).

The protein belongs to the phosphofructokinase type A (PFKA) family. ATP-dependent PFK group I subfamily. Eukaryotic two domain clade 'E' sub-subfamily. As to quaternary structure, homo- and heterotetramers. Phosphofructokinase (PFK) enzyme functions as a tetramer composed of different combinations of 3 types of subunits, called PFKM (M), PFKL (L) and PFKP (P). The composition of the PFK tetramer differs according to the tissue type it is present in. The kinetic and regulatory properties of the tetrameric enzyme are dependent on the subunit composition, hence can vary across tissues. Mg(2+) is required as a cofactor. Post-translationally, glcNAcylation at Ser-529 by OGT decreases enzyme activity, leading to redirect glucose flux through the oxidative pentose phosphate pathway. Glycosylation is stimulated by both hypoxia and glucose deprivation.

Its subcellular location is the cytoplasm. It carries out the reaction beta-D-fructose 6-phosphate + ATP = beta-D-fructose 1,6-bisphosphate + ADP + H(+). The protein operates within carbohydrate degradation; glycolysis; D-glyceraldehyde 3-phosphate and glycerone phosphate from D-glucose: step 3/4. Its activity is regulated as follows. Allosterically activated by ADP, AMP, or fructose 2,6-bisphosphate, and allosterically inhibited by ATP or citrate. GlcNAcylation by OGT overcomes allosteric regulation. Its function is as follows. Catalyzes the phosphorylation of D-fructose 6-phosphate to fructose 1,6-bisphosphate by ATP, the first committing step of glycolysis. Negatively regulates the phagocyte oxidative burst in response to bacterial infection by controlling cellular NADPH biosynthesis and NADPH oxidase-derived reactive oxygen species. Upon macrophage activation, drives the metabolic switch toward glycolysis, thus preventing glucose turnover that produces NADPH via pentose phosphate pathway. The chain is ATP-dependent 6-phosphofructokinase, liver type from Mus musculus (Mouse).